A 1045-amino-acid chain; its full sequence is E3 ubiquitin-protein ligase Topors (1045 aa).

The segment at 1 to 35 (MGSQPPLGSPLSREEGEAPPPAPASEGRRRSRRVR) is disordered. Residues 1–195 (MGSQPPLGSP…RERNASVYSP (195 aa)) form an E3 ubiquitin-protein ligase activity region. Positions 51 to 374 (ELAASAPARP…MAAFDQHANY (324 aa)) are required for DNA-binding. Glycyl lysine isopeptide (Lys-Gly) (interchain with G-Cter in SUMO2) cross-links involve residues Lys73, Lys76, Lys83, and Lys88. At Ser98 the chain carries Phosphoserine. The segment at 103-142 (CPICLDRFDNVSYLDRCLHKFCFRCVQEWSKNKAECPLCK) adopts an RING-type zinc-finger fold. Residue Lys159 forms a Glycyl lysine isopeptide (Lys-Gly) (interchain with G-Cter in SUMO2) linkage. Position 194 is a phosphoserine (Ser194). Residue Lys249 forms a Glycyl lysine isopeptide (Lys-Gly) (interchain with G-Cter in SUMO2) linkage. The segment at 437 to 574 (SLLNTSDSSD…STSLSSPRNL (138 aa)) is required for sumoylation and localization to discrete nuclear foci. An interaction with SUMO1 region spans residues 437-654 (SLLNTSDSSD…RSRTRDSSWS (218 aa)). The segment at 442–475 (SDSSDEELVTGGATSQIQGVQTNDDLNNDSDDSS) is disordered. Positions 453–463 (GATSQIQGVQT) are enriched in polar residues. Residues 456 to 731 (SQIQGVQTND…RRTLSRAHYS (276 aa)) are interaction with p53/TP53. The segment at 456–882 (SQIQGVQTND…GKATDTTKHH (427 aa)) is interaction with TOP1. At Ser499 the chain carries Phosphoserine. The segment at 511–692 (ETVKTQEQEQ…RSRNRDRYYL (182 aa)) is disordered. The segment covering 521–534 (SYSSGDSDVSRCSS) has biased composition (low complexity). Residues 539–565 (LGKDEQINKGHCDSSTRIKSKKEEKRS) show a composition bias toward basic and acidic residues. Lys560 is covalently cross-linked (Glycyl lysine isopeptide (Lys-Gly) (interchain with G-Cter in SUMO)). Over residues 566–578 (TSLSSPRNLNSSV) the composition is skewed to polar residues. Phosphoserine is present on Ser585. Basic residues-rich tracts occupy residues 588–597 (NHRHRKRGRS), 613–630 (KNHR…KRSR), and 637–647 (PRGRRDKKRSR). The span at 654–669 (SRRSQTLSLSSESTSR) shows a compositional bias: low complexity. Lys701 participates in a covalent cross-link: Glycyl lysine isopeptide (Lys-Gly) (interchain with G-Cter in SUMO2). The disordered stretch occupies residues 713 to 936 (RDGYESSYRR…DNSGPQDPLQ (224 aa)). Ser718 is subject to Phosphoserine; by PLK1. Over residues 721 to 730 (RRRTLSRAHY) the composition is skewed to basic residues. Positions 731–747 (SRQSSSPEFRVQSFSER) are enriched in polar residues. Position 734 is a phosphoserine (Ser734). Basic and acidic residues-rich tracts occupy residues 755 to 766 (NHSERKYYYYER) and 816 to 825 (FASKAKDSHY). Glycyl lysine isopeptide (Lys-Gly) (interchain with G-Cter in SUMO2) cross-links involve residues Lys819 and Lys837. The span at 854–863 (KHKRRKRKTR) shows a compositional bias: basic residues. An interaction with UBE2I region spans residues 854–917 (KHKRRKRKTR…ITIDSDSDKD (64 aa)). Residues Ser864 and Ser866 each carry the phosphoserine modification. Residues 880 to 897 (KHHKKKKKKHKKKHKKHH) are compositionally biased toward basic residues. Residues Ser912, Ser914, and Ser1028 each carry the phosphoserine modification. The span at 913 to 923 (DSDKDSEVKED) shows a compositional bias: basic and acidic residues.

As to quaternary structure, interacts with PARK7/DJ-1. Interacts with TOP1. Interacts with p53/TP53; can both ubiquitinate and sumoylate p53/TP53. Interacts with the SUMO1 conjugating enzyme UBE2I. Interacts with SUMO1. Interacts with NKX3-1; polyubiquitinates NKX3-1 and induces its proteasomal degradation. Interacts with SIN3A; sumoylates SIN3A. Interacts with IKBKE; induced by DNA damage. Post-translationally, phosphorylation at Ser-98 regulates the E3 ubiquitin-protein ligase activity but not the SUMO1-protein ligase activity. Phosphorylation at Ser-718 increases the E3 ubiquitin-protein ligase activity versus the SUMO1-protein ligase activity resulting in increased p53/TP53 ubiquitination and degradation. In terms of processing, sumoylated. As to expression, expressed at highest levels in testis and at lower levels in adrenal gland, bone marrow, brain, colon, heart, kidney, liver, muscle, ovary, pancreas, placenta, prostate, skeletal muscle, skin, small intestine, spleen, stomach, testis, thymus, thyroid and uterus. Expressed in the alveolar epithelium of the lung. Expression is commonly decreased in colon adenocarcinomas and lung cancers.

Its subcellular location is the nucleus. The protein localises to the PML body. It carries out the reaction S-ubiquitinyl-[E2 ubiquitin-conjugating enzyme]-L-cysteine + [acceptor protein]-L-lysine = [E2 ubiquitin-conjugating enzyme]-L-cysteine + N(6)-ubiquitinyl-[acceptor protein]-L-lysine.. Its function is as follows. Functions as an E3 ubiquitin-protein ligase and as an E3 SUMO1-protein ligase. Probable tumor suppressor involved in cell growth, cell proliferation and apoptosis that regulates p53/TP53 stability through ubiquitin-dependent degradation. May regulate chromatin modification through sumoylation of several chromatin modification-associated proteins. May be involved in DNA damage-induced cell death through IKBKE sumoylation. This Homo sapiens (Human) protein is E3 ubiquitin-protein ligase Topors (TOPORS).